Here is a 323-residue protein sequence, read N- to C-terminus: Putative ABC transporter substrate-binding lipoprotein YhfQ (323 aa).

The first 19 residues, 1–19 (MKKTLIILTVLLLSVLTAA), serve as a signal peptide directing secretion. The N-palmitoyl cysteine moiety is linked to residue cysteine 20. The S-diacylglycerol cysteine moiety is linked to residue cysteine 20. Residues 51 to 322 (RVVVLELGFI…ELQKEMPAAK (272 aa)) enclose the Fe/B12 periplasmic-binding domain.

This sequence belongs to the bacterial solute-binding protein 8 family. Interacts with FloT.

The protein localises to the cell membrane. Its subcellular location is the membrane raft. The polypeptide is Putative ABC transporter substrate-binding lipoprotein YhfQ (yhfQ) (Bacillus subtilis (strain 168)).